Reading from the N-terminus, the 91-residue chain is Large ribosomal subunit protein bL31B-1 (91 aa).

It belongs to the bacterial ribosomal protein bL31 family. Type B subfamily. In terms of assembly, part of the 50S ribosomal subunit.

The chain is Large ribosomal subunit protein bL31B-1 from Streptomyces avermitilis (strain ATCC 31267 / DSM 46492 / JCM 5070 / NBRC 14893 / NCIMB 12804 / NRRL 8165 / MA-4680).